Here is a 249-residue protein sequence, read N- to C-terminus: MSLCERAASGSALLWPRVLLFGDSITQFSFQQGGWGSLLADRLVRKCDVLNRGFSGYNTRWAKIILPRLIRKGPGMENPVAVTIFFGANDSSLKDENPKQHVPLDEYSANLRDMVQYLRSVDVPRERVILITPPPLCEAAWEKECVLKGCKLNRLNSVVGEYANACLQVARDCGTDVLDLWTLMQKDSQDFSSYLSDGLHLSPMGNEFLFLNLCPLLDKKVSSLPWLLPYWKDVEEAKPELSLLGDGDY.

S24 acts as the Nucleophile in catalysis. At K63 the chain carries N6-succinyllysine. The active-site Proton donor is D197. The active-site Proton acceptor is H200.

It belongs to the 'GDSL' lipolytic enzyme family. IAH1 subfamily.

Its function is as follows. Probable lipase. In Mus musculus (Mouse), this protein is Isoamyl acetate-hydrolyzing esterase 1 homolog (Iah1).